Consider the following 359-residue polypeptide: MITVNVDLGERAYPIHIGAGLIGRTELFAPHITGSSVTIVTNTTVDPLYGDALRAALAPLGKRVSTVVLPDGEAYKNWETLNLIFDGLLTERADRKTTLVALGGGVIGDMTGFAAACYMRGVPFIQVPTTLLSQVDSSVGGKTGINHPLGKNMIGAFYQPQAVIADIGALTTLPDRELAAGVAEVIKTGAIADAEFFDWIEANVDALNRREPAALAHAVKRSCEIKASVVAADEREGGLRAILNFGHTFGHAIEAGLGYGEWLHGEAVGCGMVMAADLSVRLGLLDEASRQRLDAVIAAAHLPVRGPALGDARYMELMRVDKKAEAGAIKFILLKRFGDTLITQAPDEAVFATLAQTTR.

Residues 71–76, 105–109, 129–130, Lys-142, and Lys-151 each bind NAD(+); these read DGEAYK, GVIGD, and TT. Residues Glu-184, His-247, and His-264 each contribute to the Zn(2+) site.

This sequence belongs to the sugar phosphate cyclases superfamily. Dehydroquinate synthase family. The cofactor is Co(2+). Zn(2+) is required as a cofactor. NAD(+) serves as cofactor.

Its subcellular location is the cytoplasm. It catalyses the reaction 7-phospho-2-dehydro-3-deoxy-D-arabino-heptonate = 3-dehydroquinate + phosphate. It participates in metabolic intermediate biosynthesis; chorismate biosynthesis; chorismate from D-erythrose 4-phosphate and phosphoenolpyruvate: step 2/7. Functionally, catalyzes the conversion of 3-deoxy-D-arabino-heptulosonate 7-phosphate (DAHP) to dehydroquinate (DHQ). In Burkholderia ambifaria (strain MC40-6), this protein is 3-dehydroquinate synthase.